The primary structure comprises 225 residues: NAD(P)H-quinone oxidoreductase subunit K, chloroplastic (225 aa).

The [4Fe-4S] cluster site is built by C43, C44, C108, and C139.

Belongs to the complex I 20 kDa subunit family. NDH is composed of at least 16 different subunits, 5 of which are encoded in the nucleus. [4Fe-4S] cluster is required as a cofactor.

The protein localises to the plastid. Its subcellular location is the chloroplast thylakoid membrane. It carries out the reaction a plastoquinone + NADH + (n+1) H(+)(in) = a plastoquinol + NAD(+) + n H(+)(out). It catalyses the reaction a plastoquinone + NADPH + (n+1) H(+)(in) = a plastoquinol + NADP(+) + n H(+)(out). In terms of biological role, NDH shuttles electrons from NAD(P)H:plastoquinone, via FMN and iron-sulfur (Fe-S) centers, to quinones in the photosynthetic chain and possibly in a chloroplast respiratory chain. The immediate electron acceptor for the enzyme in this species is believed to be plastoquinone. Couples the redox reaction to proton translocation, and thus conserves the redox energy in a proton gradient. The protein is NAD(P)H-quinone oxidoreductase subunit K, chloroplastic of Liriodendron tulipifera (Tuliptree).